We begin with the raw amino-acid sequence, 450 residues long: CBL-interacting protein kinase 23 (450 aa).

Positions 13 to 268 constitute a Protein kinase domain; sequence YELGRTLGEG…IAELINNEWF (256 aa). Residues 19-27 and K42 contribute to the ATP site; that span reads LGEGTFAKV. The Proton acceptor role is filled by D136. An activation loop region spans residues 154–183; that stretch reads DFGLSALSQQVREDGLLHTTCGTPNYVAPE. One can recognise an NAF domain in the interval 306–331; that stretch reads EERPSVMNAFELISTSQGLNLGTLFE. Residues 339-368 are PPI; it reads KRETRFASRLPANEILSKIEAAAGPMGFNV.

This sequence belongs to the protein kinase superfamily. CAMK Ser/Thr protein kinase family. SNF1 subfamily. The cofactor is Mn(2+).

The catalysed reaction is L-seryl-[protein] + ATP = O-phospho-L-seryl-[protein] + ADP + H(+). The enzyme catalyses L-threonyl-[protein] + ATP = O-phospho-L-threonyl-[protein] + ADP + H(+). Functionally, CIPK serine-threonine protein kinases interact with CBL proteins. Binding of a CBL protein to the regulatory NAF domain of CIPK protein lead to the activation of the kinase in a calcium-dependent manner. This is CBL-interacting protein kinase 23 (CIPK23) from Oryza sativa subsp. japonica (Rice).